A 2694-amino-acid polypeptide reads, in one-letter code: Teneurin-3 (2694 aa).

Disordered regions lie at residues 1–45, 106–132, and 161–198; these read MDVK…SSSE, PSSL…DNQS, and TQPA…PSVT. A Teneurin N-terminal domain is found at 1-306; the sequence is MDVKERRPYC…KSSKYCSWRC (306 aa). Topologically, residues 1–312 are cytoplasmic; that stretch reads MDVKERRPYC…SWRCTALSAM (312 aa). The span at 163-184 shows a compositional bias: polar residues; the sequence is PAPSHSCNEQPSNQHQQGQSTL. Residues 313-333 form a helical membrane-spanning segment; that stretch reads AVSILLSVLLCYCIAMHLFGL. The Extracellular portion of the chain corresponds to 334–2694; that stretch reads NWQLQETEGY…FLRQSEIGKR (2361 aa). Asn374 and Asn413 each carry an N-linked (GlcNAc...) asparagine glycan. EGF-like domains are found at residues 508-539, 540-570, 572-604, 605-636, 638-671, 672-703, 704-733, and 734-768; these read TLTE…PDCS, RAAC…TECD, PSNQ…DNCE, EVDC…NNCE, LKTM…PDCS, IEVC…VCDL, KACH…EHCT, and VEGC…AGCD. 22 disulfides stabilise this stretch: Cys512/Cys522, Cys516/Cys527, Cys529/Cys538, Cys547/Cys558, Cys560/Cys569, Cys576/Cys587, Cys581/Cys592, Cys594/Cys603, Cys608/Cys619, Cys613/Cys624, Cys626/Cys635, Cys646/Cys659, Cys661/Cys670, Cys675/Cys685, Cys679/Cys690, Cys692/Cys701, Cys706/Cys716, Cys710/Cys721, Cys723/Cys732, Cys737/Cys747, Cys741/Cys756, and Cys758/Cys767. Asn664 carries an N-linked (GlcNAc...) asparagine glycan. N-linked (GlcNAc...) asparagine glycosylation is found at Asn854, Asn877, and Asn1048. NHL repeat units lie at residues 1166–1192, 1194–1238, 1264–1308, 1325–1365, and 1452–1495; these read LLAP…RRIF, SGNV…PKAL, ARCG…NGII, CDNS…ITEN, and CYQT…IRHN. An N-linked (GlcNAc...) asparagine glycan is attached at Asn1196. Residues 1505-1524 form a YD 1 repeat; it reads FEVASPASQELYVFDSNGTH. Asn1521 and Asn1538 each carry an N-linked (GlcNAc...) asparagine glycan. YD repeat units lie at residues 1541-1561, 1604-1623, and 1624-1646; these read YSNE…LRVR, YHGN…WTTF, and YDYD…TSLI. Asn1634, Asn1671, Asn1729, and Asn1814 each carry an N-linked (GlcNAc...) asparagine glycan. 18 YD repeats span residues 1817–1836, 1858–1876, 1877–1897, 1904–1921, 1922–1943, 1944–1961, 1964–1984, 1987–2007, 2015–2034, 2040–2057, 2058–2084, 2086–2099, 2100–2123, 2126–2146, 2147–2167, 2169–2189, 2201–2221, and 2223–2243; these read YSST…ERVE, YLDK…YIFD, YDLQ…HTMQ, YYRN…VTVD, YSED…VLYK, YRRQ…TRVS, YDET…FICS, YRQI…DGMV, YDNS…TPLP, FDDI…GVIY, YDIN…IKEI, YEIF…ITIQ, YDNM…TKYG, YDVD…WRYN, YDLN…LTPL, YDLR…DEDG, YNSK…TIQY, and YDGL…LQFF. An N-linked (GlcNAc...) asparagine glycan is attached at Asn1915. N-linked (GlcNAc...) asparagine glycosylation occurs at Asn2118. Asn2258 carries an N-linked (GlcNAc...) asparagine glycan. The YD 23 repeat unit spans residues 2269–2310; sequence YDLQGHLFAMEISSGEEFYIACDNTGTPLAVFSSNGLLLKQV. N-linked (GlcNAc...) asparagine glycosylation occurs at Asn2571.

The protein belongs to the tenascin family. Teneurin subfamily. Homodimer; disulfide-linked; to mediate homophilic cell adhesion. As to expression, expressed by retinal ganglion cells and their presynaptic amacrine and postsynaptic tectal cell targets.

Its subcellular location is the cell membrane. It localises to the cell projection. The protein resides in the axon. Involved in neural development by regulating the establishment of proper connectivity within the nervous system. Acts in both pre- and postsynaptic neurons in the hippocampus to control the assembly of a precise topographic projection: required in both CA1 and subicular neurons for the precise targeting of proximal CA1 axons to distal subiculum, probably by promoting homophilic cell adhesion. Required by retinal ganglion cells for acquisition of their correct morphological and functional connectivity, thereby playing a key role in the development of the visual pathway. In Danio rerio (Zebrafish), this protein is Teneurin-3 (tenm3).